The following is a 612-amino-acid chain: MVQKQYRFAPKSIFTFVFLCFVAIVVIISTSSLVQVEESLDPIEVSDEIKKHDRKVVIFPSNFQSANNKLADFLTEAFGQRLNKGDIVYKNRDTYELPQTVYTWNTIDLFQSIGEKDNLKCEKIPLNFEISKIYNKNADLYKILRDFKNENSFYYKEVSVFFPDLGKQLRERTIEKHWFQLIGSSVWLEQYGVHLMISRVIYTKTGNKVQPVISLSYVQAFDRNWTELKNVTLVVPDSGKAKFKTVSYPSFIPIPVYHNVNQQRGKFYGVEDPRIMLVKNKEGYEEPLIVYNSFNRSPPNANYLEEIKNLVKLDTYRSIFMAWIWRTQLGKSNVGSSLPDLATTDDHKYVKVKELSLPNKKRPKTEKNWTPFVIYEDQKKQGYDSHLYFIYSFQDLSILKCSLWDAGNCIWEYRMNNKKTKISELRGGTELMNVNQLLDKYNFAGLETVKDQFKGKEVWISFARAALSKCGCGSKMYRPNFTVLVKQGGRFQLSFVSSYMDFGVPILPWAKGKGLCNGKNLLIPNGISNWVLAKDEGGGFQDYMTLSLSRSDSTVDIIHMKGILKSILSEYLLQTNRDVLNNNAIHCALLESESYCKSYAENYRAHLKRWQN.

Residues 1 to 12 (MVQKQYRFAPKS) are Cytoplasmic-facing. A helical membrane pass occupies residues 13-33 (IFTFVFLCFVAIVVIISTSSL). The Extracellular portion of the chain corresponds to 34–612 (VQVEESLDPI…YRAHLKRWQN (579 aa)). 3 N-linked (GlcNAc...) asparagine glycosylation sites follow: N224, N230, and N480.

This sequence belongs to the BMT family.

It is found in the membrane. Its function is as follows. Beta-mannosyltransferase involved in cell wall biosynthesis. Required for beta-1,2-mannose transfer on phospholipomannan. The chain is Beta-mannosyltransferase 5 (BMT5) from Candida albicans (strain SC5314 / ATCC MYA-2876) (Yeast).